Consider the following 510-residue polypeptide: GTPase Der (510 aa).

2 EngA-type G domains span residues 3–167 (LKLA…GPEA) and 230–405 (IRLA…KDWT). GTP is bound by residues 9–16 (GRPNVGKS), 56–60 (DTAGF), 119–122 (NKAE), 236–243 (GRPNAGKS), 283–287 (DTAGL), and 348–351 (SKWD). A KH-like domain is found at 406-490 (ARAKTGDLNR…PIRLFVRQGK (85 aa)).

The protein belongs to the TRAFAC class TrmE-Era-EngA-EngB-Septin-like GTPase superfamily. EngA (Der) GTPase family. As to quaternary structure, associates with the 50S ribosomal subunit.

GTPase that plays an essential role in the late steps of ribosome biogenesis. The chain is GTPase Der from Hyphomonas neptunium (strain ATCC 15444).